The sequence spans 89 residues: Toxin To14 (89 aa).

Residues 1 to 19 form the signal peptide; sequence MNCLMLIFVVFLLAFGVEC. The LCN-type CS-alpha/beta domain occupies 21–85; it reads KDDYPVDTAK…SPTKTSGRCN (65 aa). 4 disulfides stabilise this stretch: C33-C84, C37-C60, C46-C67, and C50-C69.

As to expression, expressed by the venom gland.

It localises to the secreted. Its function is as follows. Inhibits voltage-gated sodium channels (Nav). This is Toxin To14 from Tityus obscurus (Amazonian scorpion).